Consider the following 79-residue polypeptide: D-alanyl carrier protein (79 aa).

Residues 1-77 (MSTKETVIDL…KIIQGIEELQ (77 aa)) form the Carrier domain. At Ser35 the chain carries O-(pantetheine 4'-phosphoryl)serine.

Belongs to the DltC family. 4'-phosphopantetheine is transferred from CoA to a specific serine of apo-DCP.

Its subcellular location is the cytoplasm. It participates in cell wall biogenesis; lipoteichoic acid biosynthesis. Its function is as follows. Carrier protein involved in the D-alanylation of lipoteichoic acid (LTA). The loading of thioester-linked D-alanine onto DltC is catalyzed by D-alanine--D-alanyl carrier protein ligase DltA. The DltC-carried D-alanyl group is further transferred to cell membrane phosphatidylglycerol (PG) by forming an ester bond, probably catalyzed by DltD. D-alanylation of LTA plays an important role in modulating the properties of the cell wall in Gram-positive bacteria, influencing the net charge of the cell wall. This is D-alanyl carrier protein from Streptococcus equi subsp. equi (strain 4047).